We begin with the raw amino-acid sequence, 387 residues long: BTB and MATH domain-containing protein 38 (387 aa).

Residues Glu79–Val204 enclose the MATH domain. A BTB domain is found at Cys228–Ser295.

In Caenorhabditis elegans, this protein is BTB and MATH domain-containing protein 38 (bath-38).